Here is a 267-residue protein sequence, read N- to C-terminus: Glutamate 5-kinase (267 aa).

Lysine 17 provides a ligand contact to ATP. Substrate contacts are provided by serine 57, aspartate 144, and asparagine 156. Residues 176–177 (SD) and 218–224 (TGGMATK) each bind ATP.

It belongs to the glutamate 5-kinase family.

Its subcellular location is the cytoplasm. The enzyme catalyses L-glutamate + ATP = L-glutamyl 5-phosphate + ADP. The protein operates within amino-acid biosynthesis; L-proline biosynthesis; L-glutamate 5-semialdehyde from L-glutamate: step 1/2. Its function is as follows. Catalyzes the transfer of a phosphate group to glutamate to form L-glutamate 5-phosphate. The polypeptide is Glutamate 5-kinase (Clostridium acetobutylicum (strain ATCC 824 / DSM 792 / JCM 1419 / IAM 19013 / LMG 5710 / NBRC 13948 / NRRL B-527 / VKM B-1787 / 2291 / W)).